A 182-amino-acid chain; its full sequence is NADH-quinone oxidoreductase subunit I (182 aa).

4Fe-4S ferredoxin-type domains follow at residues 52-82 and 92-121; these read LTRDPDGEERCVACNLCAVACPVGCISLQKA and DFFRINFSRCIFCGLCEEACPTTAIQLTPD. [4Fe-4S] cluster is bound by residues Cys62, Cys65, Cys68, Cys72, Cys101, Cys104, Cys107, and Cys111.

The protein belongs to the complex I 23 kDa subunit family. As to quaternary structure, NDH-1 is composed of 13 different subunits. Subunits NuoA, H, J, K, L, M, N constitute the membrane sector of the complex. [4Fe-4S] cluster is required as a cofactor.

The protein resides in the cell inner membrane. It catalyses the reaction a quinone + NADH + 5 H(+)(in) = a quinol + NAD(+) + 4 H(+)(out). In terms of biological role, NDH-1 shuttles electrons from NADH, via FMN and iron-sulfur (Fe-S) centers, to quinones in the respiratory chain. The immediate electron acceptor for the enzyme in this species is believed to be ubiquinone. Couples the redox reaction to proton translocation (for every two electrons transferred, four hydrogen ions are translocated across the cytoplasmic membrane), and thus conserves the redox energy in a proton gradient. The protein is NADH-quinone oxidoreductase subunit I of Pseudomonas syringae pv. syringae (strain B728a).